The sequence spans 602 residues: Glutamine--fructose-6-phosphate aminotransferase [isomerizing] (602 aa).

The active-site Nucleophile; for GATase activity is C2. Residues 2–222 enclose the Glutamine amidotransferase type-2 domain; the sequence is CGIFGIIFAE…DGEYGYITAG (221 aa). 2 consecutive SIS domains span residues 284-422 and 452-592; these read VANA…ALGH and LAKR…PDKP. Residue K597 is the For Fru-6P isomerization activity of the active site.

In terms of assembly, homodimer.

Its subcellular location is the cytoplasm. The catalysed reaction is D-fructose 6-phosphate + L-glutamine = D-glucosamine 6-phosphate + L-glutamate. In terms of biological role, catalyzes the first step in hexosamine metabolism, converting fructose-6P into glucosamine-6P using glutamine as a nitrogen source. The protein is Glutamine--fructose-6-phosphate aminotransferase [isomerizing] of Pyrobaculum aerophilum (strain ATCC 51768 / DSM 7523 / JCM 9630 / CIP 104966 / NBRC 100827 / IM2).